Consider the following 200-residue polypeptide: dITP/XTP pyrophosphatase (200 aa).

8–13 is a substrate binding site; sequence THNPNK. Residues E41 and D71 each coordinate Mg(2+). The active-site Proton acceptor is the D71. Residues T72, 153–156, K176, and 181–182 contribute to the substrate site; these read FGYD and HR.

It belongs to the HAM1 NTPase family. As to quaternary structure, homodimer. Requires Mg(2+) as cofactor.

It carries out the reaction XTP + H2O = XMP + diphosphate + H(+). It catalyses the reaction dITP + H2O = dIMP + diphosphate + H(+). The catalysed reaction is ITP + H2O = IMP + diphosphate + H(+). Pyrophosphatase that catalyzes the hydrolysis of nucleoside triphosphates to their monophosphate derivatives, with a high preference for the non-canonical purine nucleotides XTP (xanthosine triphosphate), dITP (deoxyinosine triphosphate) and ITP. Seems to function as a house-cleaning enzyme that removes non-canonical purine nucleotides from the nucleotide pool, thus preventing their incorporation into DNA/RNA and avoiding chromosomal lesions. The sequence is that of dITP/XTP pyrophosphatase from Caldanaerobacter subterraneus subsp. tengcongensis (strain DSM 15242 / JCM 11007 / NBRC 100824 / MB4) (Thermoanaerobacter tengcongensis).